A 224-amino-acid chain; its full sequence is Peptidyl-prolyl cis-trans isomerase FKBP3 (224 aa).

Position 2 is an N-acetylalanine (Ala2). The residue at position 36 (Ser36) is a Phosphoserine. The interval 88–118 (VKLSDDKPKDSKSEETLDEGPPKYTKSILKK) is disordered. Residues 89–102 (KLSDDKPKDSKSEE) show a composition bias toward basic and acidic residues. Lys99 is subject to N6-acetyllysine. The PPIase FKBP-type domain maps to 128–224 (GDVVHCWYTG…IFEVELVDID (97 aa)). Position 152 is a phosphoserine (Ser152). Lys170 is modified (N6-acetyllysine).

It belongs to the FKBP-type PPIase family.

It localises to the nucleus. It carries out the reaction [protein]-peptidylproline (omega=180) = [protein]-peptidylproline (omega=0). Inhibited preferentially by rapamycin over FK506. FK506- and rapamycin-binding proteins (FKBPs) constitute a family of receptors for the two immunosuppressants which inhibit T-cell proliferation by arresting two distinct cytoplasmic signal transmission pathways. PPIases accelerate the folding of proteins. The chain is Peptidyl-prolyl cis-trans isomerase FKBP3 (Fkbp3) from Mus musculus (Mouse).